The primary structure comprises 241 residues: LexA repressor (241 aa).

Residues Phe-26–Thr-46 constitute a DNA-binding region (H-T-H motif). Catalysis depends on for autocatalytic cleavage activity residues Ser-162 and Lys-200.

It belongs to the peptidase S24 family. As to quaternary structure, homodimer.

It catalyses the reaction Hydrolysis of Ala-|-Gly bond in repressor LexA.. Its function is as follows. Represses a number of genes involved in the response to DNA damage (SOS response), including recA and lexA. In the presence of single-stranded DNA, RecA interacts with LexA causing an autocatalytic cleavage which disrupts the DNA-binding part of LexA, leading to derepression of the SOS regulon and eventually DNA repair. This chain is LexA repressor, found in Ruegeria sp. (strain TM1040) (Silicibacter sp.).